The sequence spans 791 residues: Solute carrier family 26 member 9 (791 aa).

The Cytoplasmic portion of the chain corresponds to 1-70; the sequence is MSQPRPRYVV…WLPKYKIKDY (70 aa). A helical transmembrane segment spans residues 71–96; sequence IIPDLLGGLSGGSIQVPQGMAFALLA. Topologically, residues 97-99 are extracellular; the sequence is NLP. A helical membrane pass occupies residues 100–117; the sequence is AVNGLYSSFFPLLTYFFL. Over 118–128 the chain is Cytoplasmic; the sequence is GGVHQMVPGTF. A helical transmembrane segment spans residues 129–142; the sequence is AVISILVGNICLQL. Topologically, residues 143-171 are extracellular; it reads APESKFQVFNNATNESYVDTAAMEAERLH. The helical transmembrane segment at 172-190 threads the bilayer; it reads VSATLACLTAIIQMGLGFM. Residues 191–202 are Cytoplasmic-facing; it reads QFGFVAIYLSES. A helical membrane pass occupies residues 203-224; sequence FIRGFMTAAGLQILISVLKYIF. Residues 225–235 lie on the Extracellular side of the membrane; the sequence is GLTIPSYTGPG. The helical intramembrane region spans 236–244; it reads SIVFTFIDI. Topologically, residues 245 to 254 are extracellular; that stretch reads CKNLPHTNIA. The helical transmembrane segment at 255–273 threads the bilayer; the sequence is SLIFALISGAFLVLVKELN. Residues 274-281 are Cytoplasmic-facing; that stretch reads ARYMHKIR. Residues 282–297 form a helical membrane-spanning segment; it reads FPIPTEMIVVVVATAI. Residues 298 to 327 are Extracellular-facing; sequence SGGCKMPKKYHMQIVGEIQRGFPTPVSPVV. Residues 328 to 348 form a helical membrane-spanning segment; sequence SQWKDMIGTAFSLAIVSYVIN. Topologically, residues 349–366 are cytoplasmic; that stretch reads LAMGRTLANKHGYDVDSN. Residues 367–382 form a helical membrane-spanning segment; sequence QEMIALGCSNFFGSFF. Residues 383 to 390 are Extracellular-facing; the sequence is KIHVICCA. Residues 391–400 form a helical membrane-spanning segment; the sequence is LSVTLAVDGA. The Cytoplasmic segment spans residues 401–404; that stretch reads GGKS. Residues 405-423 traverse the membrane as a helical segment; sequence QVASLCVSLVVMITMLVLG. Over 424 to 428 the chain is Extracellular; it reads IYLYP. A helical membrane pass occupies residues 429–450; it reads LPKSVLGALIAVNLKNSLKQLT. Topologically, residues 451–464 are cytoplasmic; the sequence is DPYYLWRKSKLDCC. A helical membrane pass occupies residues 465–476; it reads IWVVSFLSSFFL. Position 477 (Ser-477) is a topological domain, extracellular. The chain crosses the membrane as a helical span at residues 478–489; the sequence is LPYGVAVGVAFS. Residues 490–791 lie on the Cytoplasmic side of the membrane; the sequence is VLVVVFQTQF…MFHAETLTAL (302 aa). The region spanning 519 to 737 is the STAS domain; it reads TYNRAQDIQG…PSIHDAVLFA (219 aa). The disordered stretch occupies residues 602–650; sequence FENAPPTDPNNNQTPANGTSVSYITFSPDSSSPAQSEPPASAEAPGEPS. Polar residues predominate over residues 610–626; the sequence is PNNNQTPANGTSVSYIT. The span at 628-650 shows a compositional bias: low complexity; that stretch reads SPDSSSPAQSEPPASAEAPGEPS.

The protein belongs to the SLC26A/SulP transporter (TC 2.A.53) family. As to quaternary structure, homodimer. As to expression, predominantly expressed in lung at the luminal side of the bronchiolar and alveolar epithelium of lung. To a lower extent, also expressed in pancreas and prostate.

It is found in the cell membrane. The protein localises to the endomembrane system. The enzyme catalyses chloride(in) = chloride(out). It carries out the reaction hydrogencarbonate(in) + chloride(out) = hydrogencarbonate(out) + chloride(in). With respect to regulation, inhibited by ammonium and thiosulfate. Ion transporter that can act both as an ion channel and anion exchanger. Mainly acts as a chloride channel, which mediate uncoupled chloride anion transport in an alternate-access mechanism where a saturable binding site is alternately exposed to either one or the other side of the membrane. Also acts as a DIDS- and thiosulfate- sensitive anion exchanger the exchange of chloride for bicarbonate ions across the cell membrane. This chain is Solute carrier family 26 member 9, found in Homo sapiens (Human).